An 81-amino-acid chain; its full sequence is EC protein III (81 aa).

This sequence belongs to the metallothionein superfamily. Type 15 family.

Binds 5 molecules of zinc. May have a role in Zn(2+) homeostasis during embryogenesis. This chain is EC protein III, found in Triticum aestivum (Wheat).